Consider the following 268-residue polypeptide: Glutamate racemase (268 aa).

Residues 9-10 and 41-42 each bind substrate; these read DS and YG. Residue Cys73 is the Proton donor/acceptor of the active site. 74–75 provides a ligand contact to substrate; sequence NS. Catalysis depends on Cys183, which acts as the Proton donor/acceptor. 184–185 provides a ligand contact to substrate; that stretch reads TH.

It belongs to the aspartate/glutamate racemases family.

It carries out the reaction L-glutamate = D-glutamate. Its pathway is cell wall biogenesis; peptidoglycan biosynthesis. Provides the (R)-glutamate required for cell wall biosynthesis. In Shewanella piezotolerans (strain WP3 / JCM 13877), this protein is Glutamate racemase.